The chain runs to 158 residues: SsrA-binding protein (158 aa).

A disordered region spans residues 135-158; sequence DKRKTLKDRDWERDKQRGFKKDLD. Over residues 141–158 the composition is skewed to basic and acidic residues; the sequence is KDRDWERDKQRGFKKDLD.

Belongs to the SmpB family.

It is found in the cytoplasm. In terms of biological role, required for rescue of stalled ribosomes mediated by trans-translation. Binds to transfer-messenger RNA (tmRNA), required for stable association of tmRNA with ribosomes. tmRNA and SmpB together mimic tRNA shape, replacing the anticodon stem-loop with SmpB. tmRNA is encoded by the ssrA gene; the 2 termini fold to resemble tRNA(Ala) and it encodes a 'tag peptide', a short internal open reading frame. During trans-translation Ala-aminoacylated tmRNA acts like a tRNA, entering the A-site of stalled ribosomes, displacing the stalled mRNA. The ribosome then switches to translate the ORF on the tmRNA; the nascent peptide is terminated with the 'tag peptide' encoded by the tmRNA and targeted for degradation. The ribosome is freed to recommence translation, which seems to be the essential function of trans-translation. The protein is SsrA-binding protein of Psychrobacter cryohalolentis (strain ATCC BAA-1226 / DSM 17306 / VKM B-2378 / K5).